Here is a 647-residue protein sequence, read N- to C-terminus: tRNA 5-methylaminomethyl-2-thiouridine biosynthesis bifunctional protein MnmC (647 aa).

The segment at 1–227 (MLTWKNNLTP…KREMLIGSYS (227 aa)) is tRNA (mnm(5)s(2)U34)-methyltransferase. Residues 256-647 (VGAGIAGTTL…ARFLYRKVRK (392 aa)) are FAD-dependent cmnm(5)s(2)U34 oxidoreductase.

The protein in the N-terminal section; belongs to the methyltransferase superfamily. tRNA (mnm(5)s(2)U34)-methyltransferase family. This sequence in the C-terminal section; belongs to the DAO family. FAD serves as cofactor.

It is found in the cytoplasm. It catalyses the reaction 5-aminomethyl-2-thiouridine(34) in tRNA + S-adenosyl-L-methionine = 5-methylaminomethyl-2-thiouridine(34) in tRNA + S-adenosyl-L-homocysteine + H(+). Its function is as follows. Catalyzes the last two steps in the biosynthesis of 5-methylaminomethyl-2-thiouridine (mnm(5)s(2)U) at the wobble position (U34) in tRNA. Catalyzes the FAD-dependent demodification of cmnm(5)s(2)U34 to nm(5)s(2)U34, followed by the transfer of a methyl group from S-adenosyl-L-methionine to nm(5)s(2)U34, to form mnm(5)s(2)U34. The chain is tRNA 5-methylaminomethyl-2-thiouridine biosynthesis bifunctional protein MnmC from Leptospira interrogans serogroup Icterohaemorrhagiae serovar copenhageni (strain Fiocruz L1-130).